The sequence spans 477 residues: Protein RdxB (477 aa).

Residues 1–29 (MTSPDTQTSSLYAKREPVFPKRVSGKFRS) are Cytoplasmic-facing. The helical transmembrane segment at 30–50 (LKWWIMGVTLGIYYIAPWLRW) threads the bilayer. The Periplasmic portion of the chain corresponds to 51–81 (DRGPNLPDQAILVDLANRRFFFFMIEIWPHE). Residues 82–102 (FYFVAGLLIMAGLGLFLFTSA) form a helical membrane-spanning segment. Residues 103–154 (AGRVWCGYACPQTVWTDLFILVERWVEGDRNARIRLLRQRWDLEKTRKYLTK) are Cytoplasmic-facing. Residues 155-175 (WTLWLLIGLATGGAWVFYFTD) traverse the membrane as a helical segment. The Periplasmic segment spans residues 176 to 189 (APTLLVDLLTGNAH). The helical transmembrane segment at 190-210 (PVAYITMATLTATTFAFGGFA) threads the bilayer. Over 211–338 (REQICIYACP…SAWRHVFRLR (128 aa)) the chain is Cytoplasmic. Residues 253 to 281 (EPLSPDQGDCIDCMACVNVCPMGIDIRDG) form the 4Fe-4S ferredoxin-type domain. [4Fe-4S] cluster is bound by residues C262, C265, C268, C272, C286, C289, C292, and C296. The chain crosses the membrane as a helical span at residues 339–359 (TLIYTALWSGVGLALIVALFL). Topologically, residues 360–477 (RSPIDINVTP…HDTIFNGRGN (118 aa)) are periplasmic.

[4Fe-4S] cluster serves as cofactor.

Its subcellular location is the cell membrane. Its function is as follows. Involved in a membrane generated redox signal; required to maintain repression of photosynthesis gene expression in the presence of oxygen. In Cereibacter sphaeroides (strain ATCC 17023 / DSM 158 / JCM 6121 / CCUG 31486 / LMG 2827 / NBRC 12203 / NCIMB 8253 / ATH 2.4.1.) (Rhodobacter sphaeroides), this protein is Protein RdxB (rdxB).